The chain runs to 51 residues: Cytochrome bd ubiquinol oxidase subunit X (51 aa).

Topologically, residues M1–Y3 are cytoplasmic. The chain crosses the membrane as a helical span at residues F4–L26. At M27–H51 the chain is on the periplasmic side.

This sequence belongs to the cytochrome ubiquinol oxidase subunit X family. As to quaternary structure, may be a subunit of cytochrome ubiquinol oxidase.

The protein resides in the cell inner membrane. The catalysed reaction is 2 a ubiquinol + O2(in) + 4 H(+)(in) = 2 a ubiquinone + 2 H2O(in) + 4 H(+)(out). The protein operates within energy metabolism; oxidative phosphorylation. Its function is as follows. Required for correct functioning of cytochrome bd oxidase. The chain is Cytochrome bd ubiquinol oxidase subunit X (cydX) from Brucella abortus (strain 2308).